The primary structure comprises 521 residues: Membrane-bound transcription factor site-2 protease (521 aa).

Residues 1–3 are Cytoplasmic-facing; it reads MIP. A helical transmembrane segment spans residues 4–24; it reads VSLVVVVVGGWTVVYLTDLVL. The Lumenal portion of the chain corresponds to 25-74; it reads KSSVYFKHSYEDWLESNGLSISPFHIRWQTAVFNRAFYSWGRRKARMLYQ. Transmembrane regions (helical) follow at residues 75 to 95 and 96 to 107; these read WFNF…FLLG and KTLMQTLAQMMA. Topologically, residues 108–146 are lumenal; that stretch reads DSPSSYSSSSSSSSSSSSSSSSSSSSSSSSSLHNEQVLQ. Residues 113-137 are disordered; the sequence is YSSSSSSSSSSSSSSSSSSSSSSSS. The helical transmembrane segment at 147–171 threads the bilayer; it reads VVVPGINLPVNQLTYFFAAVLISGV. Position 173 (His-173) interacts with Zn(2+). Glu-174 is an active-site residue. The next 3 helical transmembrane spans lie at 176-188, 189-211, and 231-253; these read GHGI…QVRF, NGFG…TTHL, and FVLA…PFYY. His-177 lines the Zn(2+) pocket. The Lumenal portion of the chain corresponds to 254–448; that stretch reads TGVGVLITEV…LPVVVETFVK (195 aa). A glycan (N-linked (GlcNAc...) asparagine) is linked at Asn-339. 2 helical membrane passes run 449 to 466 and 467 to 478; these read YLIS…VPCF and ALDGQWILNSFL. The Lumenal segment spans residues 479–494; the sequence is DATLTSVIGDNDVKDL. A helical membrane pass occupies residues 495–515; the sequence is IGFFILLGGSVLLAANVTLGL. Topologically, residues 516 to 521 are cytoplasmic; that stretch reads WMVTAR.

The protein belongs to the peptidase M50A family. The cofactor is Zn(2+).

Its subcellular location is the membrane. It localises to the cytoplasm. It is found in the golgi apparatus membrane. It catalyses the reaction Cleaves several transcription factors that are type-2 transmembrane proteins within membrane-spanning domains. Known substrates include sterol regulatory element-binding protein (SREBP) -1, SREBP-2 and forms of the transcriptional activator ATF6. SREBP-2 is cleaved at the site 477-DRSRILL-|-CVLTFLCLSFNPLTSLLQWGGA-505. The residues Asn-Pro, 11 residues distal to the site of cleavage in the membrane-spanning domain, are important for cleavage by S2P endopeptidase. Replacement of either of these residues does not prevent cleavage, but there is no cleavage if both of these residues are replaced.. Its function is as follows. Zinc metalloprotease that mediates intramembrane proteolysis of proteins such as ATF6, ATF6B, SREBF1/SREBP1 and SREBF2/SREBP2. Catalyzes the second step in the proteolytic activation of the sterol regulatory element-binding proteins (SREBPs) SREBF1/SREBP1 and SREBF2/SREBP2: cleaves SREBPs within the first transmembrane segment, thereby releasing the N-terminal segment with a portion of the transmembrane segment attached. Mature N-terminal SREBP fragments shuttle to the nucleus and activate gene transcription. Also mediates the second step in the proteolytic activation of the cyclic AMP-dependent transcription factor ATF-6 (ATF6 and ATF6B). Involved in intramembrane proteolysis during bone formation. In astrocytes and osteoblasts, upon DNA damage and ER stress, mediates the second step of the regulated intramembrane proteolytic activation of the transcription factor CREB3L1, leading to the inhibition of cell-cycle progression. The protein is Membrane-bound transcription factor site-2 protease (MBTPS2) of Pongo abelii (Sumatran orangutan).